We begin with the raw amino-acid sequence, 131 residues long: Phosphoribosyl-AMP cyclohydrolase (131 aa).

A Mg(2+)-binding site is contributed by Asp90. Cys91 lines the Zn(2+) pocket. Residues Asp92 and Asp94 each coordinate Mg(2+). The Zn(2+) site is built by Cys107 and Cys114.

Belongs to the PRA-CH family. As to quaternary structure, homodimer. Mg(2+) is required as a cofactor. It depends on Zn(2+) as a cofactor.

Its subcellular location is the cytoplasm. The catalysed reaction is 1-(5-phospho-beta-D-ribosyl)-5'-AMP + H2O = 1-(5-phospho-beta-D-ribosyl)-5-[(5-phospho-beta-D-ribosylamino)methylideneamino]imidazole-4-carboxamide. Its pathway is amino-acid biosynthesis; L-histidine biosynthesis; L-histidine from 5-phospho-alpha-D-ribose 1-diphosphate: step 3/9. Functionally, catalyzes the hydrolysis of the adenine ring of phosphoribosyl-AMP. The chain is Phosphoribosyl-AMP cyclohydrolase from Hyphomonas neptunium (strain ATCC 15444).